A 202-amino-acid chain; its full sequence is Dephospho-CoA kinase (202 aa).

The region spanning 6–202 (KISVTGDPSS…QCFKALKGTI (197 aa)) is the DPCK domain. Position 14–19 (14–19 (SSGKTE)) interacts with ATP.

This sequence belongs to the CoaE family.

The protein resides in the cytoplasm. It catalyses the reaction 3'-dephospho-CoA + ATP = ADP + CoA + H(+). The protein operates within cofactor biosynthesis; coenzyme A biosynthesis; CoA from (R)-pantothenate: step 5/5. In terms of biological role, catalyzes the phosphorylation of the 3'-hydroxyl group of dephosphocoenzyme A to form coenzyme A. The protein is Dephospho-CoA kinase of Chlamydia muridarum (strain MoPn / Nigg).